Here is an 84-residue protein sequence, read N- to C-terminus: FMRFamide-like neuropeptides 26 (84 aa).

An N-terminal signal peptide occupies residues 1 to 19 (MKVMFMLALLFSSLVATSA). Residues 20 to 48 (FRLPFQFFGANEDFNSGLTKRNYYESKPY) constitute a propeptide that is removed on maturation. Residues Phe61 and Phe82 each carry the phenylalanine amide modification.

The protein belongs to the FARP (FMRFamide related peptide) family. In terms of tissue distribution, each flp gene is expressed in a distinct set of neurons.

The protein localises to the secreted. Its function is as follows. FMRFamides and FMRFamide-like peptides are neuropeptides. The protein is FMRFamide-like neuropeptides 26 of Caenorhabditis elegans.